The following is a 571-amino-acid chain: DDB1- and CUL4-associated factor 11 homolog (571 aa).

A disordered region spans residues 51-75 (RMKPNHSNDSDTDFSSDDEGCPKMT). Over residues 60–69 (SDTDFSSDDE) the composition is skewed to acidic residues. WD repeat units lie at residues 162-201 (RVAT…SKYR), 266-305 (RDHC…RIRT), 309-349 (AHED…DGDV), 357-396 (GHRD…NMSG), 435-479 (GHSV…VSRR), and 482-521 (GHTA…EGVI).

Belongs to the WD repeat LEC14B family.

Functionally, involved in regulation of lifespan. Required for dopaminergic CEP neuron degeneration in response to Mn(2+). Inhibits the skn-1-mediated up-regulation of tatn-1. The polypeptide is DDB1- and CUL4-associated factor 11 homolog (Caenorhabditis elegans).